The chain runs to 466 residues: MEPWPCSPGGGGGTRARHVIINVGGCRVRLAWAALARCPLARLERLRACRGHDDLLRVCDDYDVSRDEFFFDRSPCAFRAIVALLRAGKLRLLRGPCALAFRDELAYWGIDEARLERCCLRRLRRREEEAAEARAGPTERGAQGSPARALGPRGRLQRGRRRLRDVVDNPHSGLAGKLFACVSVSFVAVTAVGLCLSTMPDIRAEEERGECSPKCRSLFVLETVCVAWFSFEFLLRSLQAESKCAFLRAPLNIIDILALLPFYVSLLLGLAAGPGGTKLLERAGLVLRLLRALRVLYVMRLARHSLGLRSLGLTMRRCAREFGLLLLFLCVAMALFAPLVHLAERELGARRDFSSVPASYWWAVISMTTVGYGDMVPRSLPGQVVALSSILSGILLMAFPVTSIFHTFSRSYSELKEQQQRAASPEPALQEDSTHSATATEDSSQGPDSAGLADDSADALWVRAGR.

Residues 1–174 (MEPWPCSPGG…DVVDNPHSGL (174 aa)) lie on the Cytoplasmic side of the membrane. The disordered stretch occupies residues 131-155 (AEARAGPTERGAQGSPARALGPRGR). A helical transmembrane segment spans residues 175-196 (AGKLFACVSVSFVAVTAVGLCL). Residues 197 to 217 (STMPDIRAEEERGECSPKCRS) lie on the Extracellular side of the membrane. Residues 218–239 (LFVLETVCVAWFSFEFLLRSLQ) form a helical membrane-spanning segment. Topologically, residues 240-250 (AESKCAFLRAP) are cytoplasmic. Residues 251-271 (LNIIDILALLPFYVSLLLGLA) traverse the membrane as a helical segment. At 272–283 (AGPGGTKLLERA) the chain is on the extracellular side. Residues 284-304 (GLVLRLLRALRVLYVMRLARH) traverse the membrane as a helical; Voltage-sensor segment. The Cytoplasmic portion of the chain corresponds to 305 to 319 (SLGLRSLGLTMRRCA). The helical transmembrane segment at 320–341 (REFGLLLLFLCVAMALFAPLVH) threads the bilayer. The Extracellular segment spans residues 342–356 (LAERELGARRDFSSV). An intramembrane region (helical) is located at residues 357 to 368 (PASYWWAVISMT). The Selectivity filter signature appears at 369 to 374 (TVGYGD). The stretch at 369–376 (TVGYGDMV) is an intramembrane region. The Extracellular portion of the chain corresponds to 377–383 (PRSLPGQ). A helical membrane pass occupies residues 384-412 (VVALSSILSGILLMAFPVTSIFHTFSRSY). Over 413–466 (SELKEQQQRAASPEPALQEDSTHSATATEDSSQGPDSAGLADDSADALWVRAGR) the chain is Cytoplasmic. The segment at 416-466 (KEQQQRAASPEPALQEDSTHSATATEDSSQGPDSAGLADDSADALWVRAGR) is disordered. A compositionally biased stretch (polar residues) spans 435-447 (HSATATEDSSQGP). Residues 448–460 (DSAGLADDSADAL) are compositionally biased toward low complexity.

The protein belongs to the potassium channel family. G (TC 1.A.1.2) subfamily. Kv6.2/KCNG2 sub-subfamily. As to quaternary structure, heterodimer with KCNB1. In terms of tissue distribution, highly expressed in heart, liver, skeletal muscle, kidney and pancreas. Detected at low levels in brain, lung and placenta.

It is found in the cell membrane. Functionally, regulatory alpha-subunit of the voltage-gated potassium (Kv) channel which, when coassembled with KCNB1, can modulate the kinetics and conductance-voltage relationship. Modulates channel activity by shifting the threshold and the half-maximal activation to more negative values. Potassium channel subunit that does not form functional channels by itself. The polypeptide is Voltage-gated potassium channel regulatory subunit KCNG2 (Homo sapiens (Human)).